The sequence spans 433 residues: Ligand-dependent corepressor (433 aa).

The segment at 1–147 (MQRMIQQFAA…GTREGFGHST (147 aa)) is disordered. The span at 13 to 34 (TSKTSSTQDPSQPNSTKNQSLP) shows a compositional bias: polar residues. A compositionally biased stretch (low complexity) spans 36 to 48 (ASPVTTSPTAATT). Serine 42 carries the phosphoserine modification. The Interaction with nuclear receptors signature appears at 53-57 (LSKLL). At serine 63 the chain carries Phosphoserine. Polar residues predominate over residues 88–110 (KKSPCASSTSLSHSPGCSSTQGN). Phosphoserine is present on serine 249. Lysine 254 participates in a covalent cross-link: Glycyl lysine isopeptide (Lys-Gly) (interchain with G-Cter in SUMO2). The disordered stretch occupies residues 299–348 (QNRKSMLDAGPDSWGSDAEQSTSGQPYPTSDQEGDPGSKQPRKKRGRYRQ). Residues 316–329 (AEQSTSGQPYPTSD) show a composition bias toward polar residues. Positions 339 to 345 (PRKKRGR) match the Nuclear localization signal motif. Residues 340-392 (RKKRGRYRQYNSEILEEAISVVMSGKMSVSKAQSIYGIPHSTLEYKVKERLGT) enclose the HTH psq-type domain. The H-T-H motif DNA-binding region spans 368 to 388 (VSKAQSIYGIPHSTLEYKVKE). The tract at residues 393-412 (LKNPPKKKMKLMRSEGPDVS) is disordered. Lysine 414 participates in a covalent cross-link: Glycyl lysine isopeptide (Lys-Gly) (interchain with G-Cter in SUMO2).

Interacts with ESR1 and ESR2 in the presence of estradiol. Interacts with CTBP1, HDAC3 and HDAC6. Component of a large corepressor complex that contains about 20 proteins, including CTBP1, CTBP2, HDAC1 and HDAC2. In terms of tissue distribution, detected in heart and kidney.

The protein localises to the nucleus. Repressor of ligand-dependent transcription activation by various nuclear repressors. Repressor of ligand-dependent transcription activation by ESR1, ESR2, NR3C1, PGR, RARA, RARB, RARG, RXRA and VDR. May act as transcription activator that binds DNA elements with the sequence 5'-CCCTATCGATCGATCTCTACCT-3'. This chain is Ligand-dependent corepressor (Lcor), found in Mus musculus (Mouse).